Consider the following 518-residue polypeptide: Protein FAM98A (518 aa).

2 disordered regions span residues 297 to 415 (VLMG…GHSS) and 434 to 518 (GSGY…HYTS). Positions 302–311 (VPDRGGRPNE) are enriched in basic and acidic residues. Gly residues-rich tracts occupy residues 349-364 (GGRG…GGRG), 383-396 (WTDG…GYQD), and 405-415 (QPGGYHGGHSS). Residues 447-459 (RYQDGGHHGDRGG) are compositionally biased toward basic and acidic residues. The segment covering 460–484 (GRGGRGGRGGRGGRAGQGGGWGGRG) has biased composition (gly residues). Over residues 488 to 504 (YHQGGQFEQHFQHGGYQ) the composition is skewed to low complexity. The span at 505–518 (YNHSGFGQGRHYTS) shows a compositional bias: polar residues.

The protein belongs to the FAM98 family. Interacts (via N- and C-terminus) with DDX1. Interacts (via N- and C-terminus) with C14orf166. Interacts with FAM98B. Interacts with PLEKHM1 (via N- and C-terminus). Expressed strongly in colorectal cancer cells. Expressed strongly in colorectal cancer tissues compared to wild-type colon samples (at protein level). Expressed strongly in colorectal cancer tissues compared to wild-type colon samples.

Positively stimulates PRMT1-induced protein arginine methylation. Involved in skeletal homeostasis. Positively regulates lysosome peripheral distribution and ruffled border formation in osteoclasts. The chain is Protein FAM98A from Homo sapiens (Human).